A 129-amino-acid chain; its full sequence is uncharacterized protein (129 aa).

The N-terminal stretch at 1–24 is a signal peptide; sequence MAFGWHSMHGSIIWFLQIAQLSTA. The next 2 membrane-spanning stretches (helical) occupy residues 38–58 and 95–115; these read ISNL…CAIF and IAHI…FTPL.

The protein localises to the membrane. This is an uncharacterized protein from Saccharomyces cerevisiae (strain ATCC 204508 / S288c) (Baker's yeast).